The sequence spans 113 residues: Endoribonuclease SymE (113 aa).

The SpoVT-AbrB domain occupies 29-74 (SRYPDYSRIPAITLKGQWLEAAGFATGTAVVVKVMEGCIVLTAQPA).

This sequence belongs to the SymE family.

The protein localises to the cytoplasm. In terms of biological role, involved in the degradation and recycling of damaged RNA. It is itself a target for degradation by the ATP-dependent protease Lon. The sequence is that of Endoribonuclease SymE from Escherichia coli (strain ATCC 8739 / DSM 1576 / NBRC 3972 / NCIMB 8545 / WDCM 00012 / Crooks).